We begin with the raw amino-acid sequence, 734 residues long: PI-PLC X-box domain-containing protein DDB_G0293730 (734 aa).

Positions 8–70 (IKNILLKIEK…ELNEKLIVEK (63 aa)) form a coiled coil. One can recognise a PI-PLC X-box domain in the interval 440–604 (KLKDRKVRNL…CIYDDLVNPL (165 aa)).

This chain is PI-PLC X-box domain-containing protein DDB_G0293730, found in Dictyostelium discoideum (Social amoeba).